Reading from the N-terminus, the 558-residue chain is Dihydroxy-acid dehydratase (558 aa).

Cysteine 50 serves as a coordination point for [2Fe-2S] cluster. A Mg(2+)-binding site is contributed by aspartate 82. Cysteine 123 is a binding site for [2Fe-2S] cluster. Mg(2+)-binding residues include aspartate 124 and lysine 125. Lysine 125 is subject to N6-carboxylysine. Position 195 (cysteine 195) interacts with [2Fe-2S] cluster. Mg(2+) is bound at residue glutamate 447. Catalysis depends on serine 472, which acts as the Proton acceptor.

Belongs to the IlvD/Edd family. In terms of assembly, homodimer. Requires [2Fe-2S] cluster as cofactor. Mg(2+) is required as a cofactor.

It carries out the reaction (2R)-2,3-dihydroxy-3-methylbutanoate = 3-methyl-2-oxobutanoate + H2O. The enzyme catalyses (2R,3R)-2,3-dihydroxy-3-methylpentanoate = (S)-3-methyl-2-oxopentanoate + H2O. It functions in the pathway amino-acid biosynthesis; L-isoleucine biosynthesis; L-isoleucine from 2-oxobutanoate: step 3/4. Its pathway is amino-acid biosynthesis; L-valine biosynthesis; L-valine from pyruvate: step 3/4. In terms of biological role, functions in the biosynthesis of branched-chain amino acids. Catalyzes the dehydration of (2R,3R)-2,3-dihydroxy-3-methylpentanoate (2,3-dihydroxy-3-methylvalerate) into 2-oxo-3-methylpentanoate (2-oxo-3-methylvalerate) and of (2R)-2,3-dihydroxy-3-methylbutanoate (2,3-dihydroxyisovalerate) into 2-oxo-3-methylbutanoate (2-oxoisovalerate), the penultimate precursor to L-isoleucine and L-valine, respectively. The polypeptide is Dihydroxy-acid dehydratase (Saccharolobus islandicus (strain M.16.27) (Sulfolobus islandicus)).